The primary structure comprises 359 residues: NADPH HC-toxin reductase 2 (359 aa).

NADP(+)-binding positions include arginine 39, 67 to 68, 87 to 89, tyrosine 177, lysine 181, 206 to 209, and threonine 221; these read DL, VAT, and LGLV. Lysine 181 functions as the Proton donor in the catalytic mechanism.

This sequence belongs to the NAD(P)-dependent epimerase/dehydratase family.

Its function is as follows. In tandem with Hm1, NADPH-dependent HC toxin reductase (HCTR), which inactivates HC toxin, a cyclic tetrapeptide produced by the fungus Cochliobolus carbonum to permit infection and acting as an inhibitor of host histone deacetylases (HDACs), thus conferring resistance against C.carbonum race 1 in resistant cultivars (e.g. cv. B73 and cv. Wisconsin 22). Catalyzes the production of 8-hydroxy derivative of HC-toxin via the reduction of the 8-keto group of 2-amino-9,10-epoxy-8-oxo-decanoic acid, an amino acid of the HC-toxin. The protein is NADPH HC-toxin reductase 2 of Zea mays (Maize).